A 101-amino-acid polypeptide reads, in one-letter code: Small ribosomal subunit protein uS14 (101 aa).

Belongs to the universal ribosomal protein uS14 family. Part of the 30S ribosomal subunit. Contacts proteins S3 and S10.

Functionally, binds 16S rRNA, required for the assembly of 30S particles and may also be responsible for determining the conformation of the 16S rRNA at the A site. This Ehrlichia chaffeensis (strain ATCC CRL-10679 / Arkansas) protein is Small ribosomal subunit protein uS14.